Here is an 889-residue protein sequence, read N- to C-terminus: Protein translocase subunit SecA (889 aa).

Residues Gln-87, 105–109 (GEGKT), and Asp-494 each bind ATP. The interval 823-889 (ESLRPEEADL…RMDKDTKGKR (67 aa)) is disordered. Positions 867–889 (PRDDRPMNREERRRMDKDTKGKR) are enriched in basic and acidic residues.

The protein belongs to the SecA family. As to quaternary structure, monomer and homodimer. Part of the essential Sec protein translocation apparatus which comprises SecA, SecYEG and auxiliary proteins SecDF-YajC and YidC.

It is found in the cell inner membrane. Its subcellular location is the cytoplasm. The enzyme catalyses ATP + H2O + cellular proteinSide 1 = ADP + phosphate + cellular proteinSide 2.. Part of the Sec protein translocase complex. Interacts with the SecYEG preprotein conducting channel. Has a central role in coupling the hydrolysis of ATP to the transfer of proteins into and across the cell membrane, serving as an ATP-driven molecular motor driving the stepwise translocation of polypeptide chains across the membrane. In Bdellovibrio bacteriovorus (strain ATCC 15356 / DSM 50701 / NCIMB 9529 / HD100), this protein is Protein translocase subunit SecA.